The primary structure comprises 543 residues: Ribonuclease Y (543 aa).

Residues 4–24 (IIMIPVATAIVSLLVGTVTGY) form a helical membrane-spanning segment. The 64-residue stretch at 233-296 (TVSVVDLPNE…EIAKRAMERL (64 aa)) folds into the KH domain. In terms of domain architecture, HD spans 359-452 (VLSHSIEVGK…VVAADTISSA (94 aa)).

The protein belongs to the RNase Y family.

It localises to the cell membrane. Endoribonuclease that initiates mRNA decay. The sequence is that of Ribonuclease Y from Lactobacillus acidophilus (strain ATCC 700396 / NCK56 / N2 / NCFM).